The following is a 53-amino-acid chain: Large ribosomal subunit protein eL40 (53 aa).

This sequence belongs to the eukaryotic ribosomal protein eL40 family.

In Pyrobaculum calidifontis (strain DSM 21063 / JCM 11548 / VA1), this protein is Large ribosomal subunit protein eL40.